Here is a 598-residue protein sequence, read N- to C-terminus: Elongation factor 4 (598 aa).

One can recognise a tr-type G domain in the interval 2–184; the sequence is KQIRNFSIIA…RLVKEIPAPE (183 aa). Residues 14–19 and 131–134 each bind GTP; these read DHGKST and NKID.

The protein belongs to the TRAFAC class translation factor GTPase superfamily. Classic translation factor GTPase family. LepA subfamily.

Its subcellular location is the cell inner membrane. The catalysed reaction is GTP + H2O = GDP + phosphate + H(+). Functionally, required for accurate and efficient protein synthesis under certain stress conditions. May act as a fidelity factor of the translation reaction, by catalyzing a one-codon backward translocation of tRNAs on improperly translocated ribosomes. Back-translocation proceeds from a post-translocation (POST) complex to a pre-translocation (PRE) complex, thus giving elongation factor G a second chance to translocate the tRNAs correctly. Binds to ribosomes in a GTP-dependent manner. This is Elongation factor 4 from Photorhabdus laumondii subsp. laumondii (strain DSM 15139 / CIP 105565 / TT01) (Photorhabdus luminescens subsp. laumondii).